Consider the following 358-residue polypeptide: DnaJ homolog subfamily C member 18 (358 aa).

The J domain maps to 82 to 146; it reads NYYEILGVSR…DKRLRYDEYG (65 aa). The chain crosses the membrane as a helical span at residues 228-248; that stretch reads AFIQLLPVLVIVIISVITQLL.

The protein localises to the endoplasmic reticulum membrane. Functionally, (Microbial infection) In case of infection by polyomavirus, involved in the virus endoplasmic reticulum membrane penetration and infection. Regulates the recruitment of DNAJB12:DNAJB14 into SV40-induced foci and all cooperate to guide SV40 across the endoplasmic reticulum membrane. The foci represent the site from which SV40 penetrates into the cytosol. In Homo sapiens (Human), this protein is DnaJ homolog subfamily C member 18.